Consider the following 375-residue polypeptide: 4-hydroxy-3-methylbut-2-en-1-yl diphosphate synthase (flavodoxin) (375 aa).

[4Fe-4S] cluster-binding residues include C270, C273, C305, and E312.

The protein belongs to the IspG family. [4Fe-4S] cluster serves as cofactor.

It carries out the reaction (2E)-4-hydroxy-3-methylbut-2-enyl diphosphate + oxidized [flavodoxin] + H2O + 2 H(+) = 2-C-methyl-D-erythritol 2,4-cyclic diphosphate + reduced [flavodoxin]. Its pathway is isoprenoid biosynthesis; isopentenyl diphosphate biosynthesis via DXP pathway; isopentenyl diphosphate from 1-deoxy-D-xylulose 5-phosphate: step 5/6. In terms of biological role, converts 2C-methyl-D-erythritol 2,4-cyclodiphosphate (ME-2,4cPP) into 1-hydroxy-2-methyl-2-(E)-butenyl 4-diphosphate. The chain is 4-hydroxy-3-methylbut-2-en-1-yl diphosphate synthase (flavodoxin) from Yersinia pseudotuberculosis serotype IB (strain PB1/+).